Reading from the N-terminus, the 82-residue chain is Beta-insect toxin AaBTxL1 (82 aa).

Residues 1–22 (MMKLVLFSVIVILFSLIGSIHG) form the signal peptide. One can recognise an LCN-type CS-alpha/beta domain in the interval 25 to 82 (VPGNYPLDRSGKKYPCTITWKKNPSCIQICKKHGVKYGYCFDFQCWCEIFGRLKTFKI). Disulfide bonds link Cys40–Cys64, Cys50–Cys69, and Cys54–Cys71.

This sequence belongs to the long (3 C-C) scorpion toxin superfamily. Sodium channel inhibitor family. Beta subfamily. As to expression, expressed by the venom gland.

Its subcellular location is the secreted. Shifts the voltage of activation of para/tipE voltage-dependent sodium channels (Nav) toward more negative potentials. The chain is Beta-insect toxin AaBTxL1 from Androctonus australis (Sahara scorpion).